The chain runs to 288 residues: Prohibitin-1, mitochondrial (288 aa).

Residues 1–10 (MNNVKVPKIP) are Mitochondrial matrix-facing. A helical; Signal-anchor for type II membrane protein transmembrane segment spans residues 11 to 30 (GGGAISTLLKVGIIGGLGLY). Residues 31–288 (GATHSLYNVE…GMNLDVDAKN (258 aa)) lie on the Mitochondrial intermembrane side of the membrane. The stretch at 186–219 (KEFTAAIEAKQVAAQEAERAKFIVEKAEQDKRSA) forms a coiled coil.

The protein belongs to the prohibitin family. In terms of assembly, component of a prohibitin multimeric complex in mitochondrial membranes. As to expression, mostly expressed in proliferative tissues, including vasculature, shoot and root apical tissues.

The protein localises to the mitochondrion inner membrane. Its function is as follows. Prohibitin probably acts as a holdase/unfoldase for the stabilization of newly synthesized mitochondrial proteins. This is Prohibitin-1, mitochondrial (PHB1) from Arabidopsis thaliana (Mouse-ear cress).